The primary structure comprises 515 residues: Glycosyltransferase family 92 protein F59C6.8 (515 aa).

A helical transmembrane segment spans residues 18–38; sequence LFIFIAVCLGFLIAVTILAGL. The GT92 domain occupies 163–456; it reads RKVVACFSPL…IEVCYNRIFY (294 aa).

The protein belongs to the glycosyltransferase 92 family.

The protein resides in the membrane. This chain is Glycosyltransferase family 92 protein F59C6.8, found in Caenorhabditis elegans.